The chain runs to 105 residues: Nitrogen fixation nifHD region glnB-like protein 1 (105 aa).

Belongs to the P(II) protein family.

Functionally, could be involved in the regulation of nitrogen fixation. This is Nitrogen fixation nifHD region glnB-like protein 1 (glnBI) from Methanococcus maripaludis (Methanococcus deltae).